The following is a 202-amino-acid chain: Na(+)-translocating NADH-quinone reductase subunit E (202 aa).

Transmembrane regions (helical) follow at residues 11–31 (SIFL…FLAV), 39–59 (MGLG…NQLV), 79–99 (LSFL…QILE), 114–134 (GIFL…AFAV), 144–164 (IFYG…LAAV), and 180–200 (LGSV…FSGV).

It belongs to the NqrDE/RnfAE family. In terms of assembly, composed of six subunits; NqrA, NqrB, NqrC, NqrD, NqrE and NqrF.

The protein localises to the cell inner membrane. The enzyme catalyses a ubiquinone + n Na(+)(in) + NADH + H(+) = a ubiquinol + n Na(+)(out) + NAD(+). In terms of biological role, NQR complex catalyzes the reduction of ubiquinone-1 to ubiquinol by two successive reactions, coupled with the transport of Na(+) ions from the cytoplasm to the periplasm. NqrA to NqrE are probably involved in the second step, the conversion of ubisemiquinone to ubiquinol. The polypeptide is Na(+)-translocating NADH-quinone reductase subunit E (Pseudoalteromonas atlantica (strain T6c / ATCC BAA-1087)).